A 357-amino-acid polypeptide reads, in one-letter code: APGTLTELAGESKLNSKFVRDEDERPKVAYNEFSDEIPVISLAGIDDVDGKRGEICREIVEACENWGIFQVVDHGVDTSLVADMTRLARDFFALPPEEKLRFDMSGGKKGGFIVSSHLQGEAVQDWREIVTYFSYPVRNRDYSRWPDKPQGWAKVTEEYSEKLMGLACKLLEVLSEAMGLEKESLTNACVDMDQKIVVNYYPKCPQPDLTLGLKRHTDPGTITLLLQDQVGGLQATRDDGNTWITVQPVEGAFVVNLGDHGHFLSNGRFKNADHQAVVNSNSSRLSIATFQNPAPEATVYPLKVREGEKAIMEEPITFAEMYKRKMGRDLELARLKKLAKEEHNHKEAAKPLDQILA.

The 105-residue stretch at 189–293 (CVDMDQKIVV…RLSIATFQNP (105 aa)) folds into the Fe2OG dioxygenase domain. Residues histidine 216, aspartate 218, and histidine 274 each contribute to the Fe cation site. Arginine 284 provides a ligand contact to 2-oxoglutarate.

The protein belongs to the iron/ascorbate-dependent oxidoreductase family. Requires Fe(2+) as cofactor. L-ascorbate serves as cofactor.

The catalysed reaction is a (2S)-flavan-4-one + 2-oxoglutarate + O2 = a (2R,3R)-dihydroflavonol + succinate + CO2. The protein operates within secondary metabolite biosynthesis; flavonoid biosynthesis. Catalyzes the 3-beta-hydroxylation of 2S-flavanones to 2R,3R-dihydroflavonols which are intermediates in the biosynthesis of flavonols, anthocyanidins, catechins and proanthocyanidins in plants. The polypeptide is Naringenin,2-oxoglutarate 3-dioxygenase (FHT) (Matthiola incana (Common stock)).